The following is a 420-amino-acid chain: Vasopressin V1a receptor (420 aa).

The disordered stretch occupies residues Met-1–Val-45. Residues Met-1–Glu-54 lie on the Extracellular side of the membrane. Asn-27 is a glycosylation site (N-linked (GlcNAc...) asparagine). Residues Ala-32–Val-45 are compositionally biased toward basic and acidic residues. The chain crosses the membrane as a helical span at residues Ile-55–Ala-75. Residues Leu-76–His-92 lie on the Cytoplasmic side of the membrane. The helical transmembrane segment at Leu-93–Ile-113 threads the bilayer. The Extracellular segment spans residues Thr-114–Arg-125. A disulfide bridge connects residues Cys-124 and Cys-205. A helical transmembrane segment spans residues Val-126–Thr-146. Residues Ala-147 to Arg-168 lie on the Cytoplasmic side of the membrane. The chain crosses the membrane as a helical span at residues Leu-169–Phe-189. At Ser-190–Gly-225 the chain is on the extracellular side. A glycan (N-linked (GlcNAc...) asparagine) is linked at Asn-198. The helical transmembrane segment at Val-226–Trp-246 threads the bilayer. The Cytoplasmic portion of the chain corresponds to Arg-247–Met-294. A helical membrane pass occupies residues Thr-295–Trp-315. The Extracellular portion of the chain corresponds to Ser-316–Ser-331. The chain crosses the membrane as a helical span at residues Ile-332–Phe-352. Topologically, residues Phe-353 to Thr-420 are cytoplasmic. 2 S-palmitoyl cysteine lipidation sites follow: Cys-367 and Cys-368. The disordered stretch occupies residues Asp-379–Arg-411. Over residues Arg-385–Trp-403 the composition is skewed to polar residues. The residue at position 406 (Ser-406) is a Phosphoserine.

The protein belongs to the G-protein coupled receptor 1 family. Vasopressin/oxytocin receptor subfamily.

The protein resides in the cell membrane. In terms of biological role, receptor for arginine vasopressin. The activity of this receptor is mediated by G proteins which activate a phosphatidyl-inositol-calcium second messenger system. Involved in social memory formation. The sequence is that of Vasopressin V1a receptor (Avpr1a) from Microtus montanus (Montane vole).